The following is a 350-amino-acid chain: Nicotinate-nucleotide--dimethylbenzimidazole phosphoribosyltransferase (350 aa).

Glu-317 functions as the Proton acceptor in the catalytic mechanism.

Belongs to the CobT family.

It carries out the reaction 5,6-dimethylbenzimidazole + nicotinate beta-D-ribonucleotide = alpha-ribazole 5'-phosphate + nicotinate + H(+). It participates in nucleoside biosynthesis; alpha-ribazole biosynthesis; alpha-ribazole from 5,6-dimethylbenzimidazole: step 1/2. Its function is as follows. Catalyzes the synthesis of alpha-ribazole-5'-phosphate from nicotinate mononucleotide (NAMN) and 5,6-dimethylbenzimidazole (DMB). This Shewanella sp. (strain ANA-3) protein is Nicotinate-nucleotide--dimethylbenzimidazole phosphoribosyltransferase.